The primary structure comprises 310 residues: Ribose-phosphate pyrophosphokinase (310 aa).

ATP is bound by residues 33–35 (DGE) and 92–93 (RQ). Residues His-127 and Asp-166 each coordinate Mg(2+). The active site involves Lys-189. Residues Arg-191, Asp-215, and 219–223 (DTAGT) contribute to the D-ribose 5-phosphate site.

It belongs to the ribose-phosphate pyrophosphokinase family. Class I subfamily. In terms of assembly, homohexamer. The cofactor is Mg(2+).

It is found in the cytoplasm. It carries out the reaction D-ribose 5-phosphate + ATP = 5-phospho-alpha-D-ribose 1-diphosphate + AMP + H(+). Its pathway is metabolic intermediate biosynthesis; 5-phospho-alpha-D-ribose 1-diphosphate biosynthesis; 5-phospho-alpha-D-ribose 1-diphosphate from D-ribose 5-phosphate (route I): step 1/1. Functionally, involved in the biosynthesis of the central metabolite phospho-alpha-D-ribosyl-1-pyrophosphate (PRPP) via the transfer of pyrophosphoryl group from ATP to 1-hydroxyl of ribose-5-phosphate (Rib-5-P). The sequence is that of Ribose-phosphate pyrophosphokinase from Bordetella parapertussis (strain 12822 / ATCC BAA-587 / NCTC 13253).